A 238-amino-acid polypeptide reads, in one-letter code: UPF0328 protein ECU07_0010 (238 aa).

Disordered regions lie at residues M1–R154 and G211–L238. Basic and acidic residues predominate over residues H106–S128. A compositionally biased stretch (polar residues) spans P129–T152.

Belongs to the UPF0328 family.

The chain is UPF0328 protein ECU07_0010 from Encephalitozoon cuniculi (strain GB-M1) (Microsporidian parasite).